The sequence spans 635 residues: Threonine--tRNA ligase (635 aa).

Residues 1-144 (MQLLLIHSDY…RTIRLEGAVP (144 aa)) are editing domain. The segment at 215 to 514 (PHVELMRRLE…AEEGKVPNLP (300 aa)) is catalytic. Residues Cys-307, His-359, and His-483 each contribute to the Zn(2+) site.

Belongs to the class-II aminoacyl-tRNA synthetase family. Homodimer. Requires Zn(2+) as cofactor.

Its subcellular location is the cytoplasm. The catalysed reaction is tRNA(Thr) + L-threonine + ATP = L-threonyl-tRNA(Thr) + AMP + diphosphate + H(+). Catalyzes the attachment of threonine to tRNA(Thr) in a two-step reaction: L-threonine is first activated by ATP to form Thr-AMP and then transferred to the acceptor end of tRNA(Thr). Also edits incorrectly charged L-seryl-tRNA(Thr). This chain is Threonine--tRNA ligase, found in Methanococcoides burtonii (strain DSM 6242 / NBRC 107633 / OCM 468 / ACE-M).